A 301-amino-acid polypeptide reads, in one-letter code: Transposase InsD for insertion element IS2D (301 aa).

Residues 106–289 (KPAVPPSKRA…SPREYLRQRA (184 aa)) enclose the Integrase catalytic domain.

In terms of biological role, involved in the transposition of the insertion sequence IS2. This Escherichia coli (strain K12) protein is Transposase InsD for insertion element IS2D (insD2).